Consider the following 239-residue polypeptide: Probable inner membrane transporter protein TsaS (239 aa).

A run of 4 helical transmembrane segments spans residues 65–85 (AIGAILPGMAVGALIGLWLMG), 128–148 (GLVGVLEVMFATAGPMVIALL), 160–180 (ATVPVVMVVAASIAIAVLFGA), and 186–206 (AHTFERWLVALPIAFMGVVLG).

This sequence belongs to the 4-toluene sulfonate uptake permease (TSUP) (TC 2.A.102) family. Part of a two-component transport system composed of TsaT and TsaS.

The protein localises to the cell inner membrane. Its function is as follows. Involved in the uptake of p-toluenesulphonate (TSA). The sequence is that of Probable inner membrane transporter protein TsaS (tsaS) from Comamonas testosteroni (Pseudomonas testosteroni).